Here is a 372-residue protein sequence, read N- to C-terminus: Cobalt-precorrin-5B C(1)-methyltransferase (372 aa).

It belongs to the CbiD family.

It carries out the reaction Co-precorrin-5B + S-adenosyl-L-methionine = Co-precorrin-6A + S-adenosyl-L-homocysteine. The protein operates within cofactor biosynthesis; adenosylcobalamin biosynthesis; cob(II)yrinate a,c-diamide from sirohydrochlorin (anaerobic route): step 6/10. Its function is as follows. Catalyzes the methylation of C-1 in cobalt-precorrin-5B to form cobalt-precorrin-6A. The chain is Cobalt-precorrin-5B C(1)-methyltransferase from Prochlorococcus marinus (strain MIT 9515).